Reading from the N-terminus, the 156-residue chain is 6,7-dimethyl-8-ribityllumazine synthase (156 aa).

5-amino-6-(D-ribitylamino)uracil is bound by residues phenylalanine 23, 57 to 59 (AFE), and 81 to 83 (AVI). 86–87 (ST) lines the (2S)-2-hydroxy-3-oxobutyl phosphate pocket. The active-site Proton donor is histidine 89. Phenylalanine 114 is a 5-amino-6-(D-ribitylamino)uracil binding site. Arginine 128 is a (2S)-2-hydroxy-3-oxobutyl phosphate binding site.

Belongs to the DMRL synthase family.

The enzyme catalyses (2S)-2-hydroxy-3-oxobutyl phosphate + 5-amino-6-(D-ribitylamino)uracil = 6,7-dimethyl-8-(1-D-ribityl)lumazine + phosphate + 2 H2O + H(+). It functions in the pathway cofactor biosynthesis; riboflavin biosynthesis; riboflavin from 2-hydroxy-3-oxobutyl phosphate and 5-amino-6-(D-ribitylamino)uracil: step 1/2. Its function is as follows. Catalyzes the formation of 6,7-dimethyl-8-ribityllumazine by condensation of 5-amino-6-(D-ribitylamino)uracil with 3,4-dihydroxy-2-butanone 4-phosphate. This is the penultimate step in the biosynthesis of riboflavin. The protein is 6,7-dimethyl-8-ribityllumazine synthase of Brachyspira hyodysenteriae (strain ATCC 49526 / WA1).